A 485-amino-acid polypeptide reads, in one-letter code: Terminase, large subunit (485 aa).

ADP is bound by residues 17–22 (KPHHVQ), 40–45 (QSGKSE), and Arg79. Positions 22–197 (QLAIHRSTAK…EFFLMGWRGG (176 aa)) are ATPase activity. ATP contacts are provided by Gln97 and Gln99. Positions 125–131 (SEFRGKS) match the Walker A motif motif. The Walker B motif signature appears at 145–150 (FVILDE). Catalysis depends on Glu150, which acts as the For ATPase activity. A nuclease region spans residues 256-438 (SNSVFSGLDM…DIVMSLALAY (183 aa)). Mg(2+)-binding residues include Asp294, Asp347, and Asp429.

This sequence belongs to the Tequatrovirus large terminase family. In terms of assembly, interacts with the terminase small subunit; the active complex is composed of a pentamer of terminase large subunits and a dodecamer of terminase small subunits. Interacts with the portal protein. Requires Mg(2+) as cofactor.

Its function is as follows. The terminase large subunit acts as an ATP driven molecular motor necessary for viral DNA translocation into empty capsids and as an endonuclease that cuts the viral genome to initiate and to end a packaging reaction The terminase lies at a unique vertex of the procapsid and is composed of two subunits, a small terminase subunit involved in viral DNA recognition (packaging sequence), and a large terminase subunit possessing endonucleolytic and ATPase activities. Both terminase subunits heterooligomerize and are docked on the portal protein to form the packaging machine. The terminase large subunit exhibits endonuclease activity and cleaves the viral genome concatemer. Once the capsid is packaged with the DNA, the terminase complex is substituted by the tail. This chain is Terminase, large subunit, found in Thermus thermophilus (Thermus thermophilus phage P23-45).